The chain runs to 442 residues: tRNA-2-methylthio-N(6)-dimethylallyladenosine synthase (442 aa).

An MTTase N-terminal domain is found at 2-120 (KKVFIRTFGC…LPKMIVDKET (119 aa)). Cys-11, Cys-49, Cys-83, Cys-157, Cys-161, and Cys-164 together coordinate [4Fe-4S] cluster. In terms of domain architecture, Radical SAM core spans 143–375 (RVEGGAAFVS…NEVIEAETAR (233 aa)). The TRAM domain occupies 378–441 (QTMIGTVQRC…TFSLRGKVVE (64 aa)).

This sequence belongs to the methylthiotransferase family. MiaB subfamily. Monomer. [4Fe-4S] cluster is required as a cofactor.

Its subcellular location is the cytoplasm. The enzyme catalyses N(6)-dimethylallyladenosine(37) in tRNA + (sulfur carrier)-SH + AH2 + 2 S-adenosyl-L-methionine = 2-methylsulfanyl-N(6)-dimethylallyladenosine(37) in tRNA + (sulfur carrier)-H + 5'-deoxyadenosine + L-methionine + A + S-adenosyl-L-homocysteine + 2 H(+). In terms of biological role, catalyzes the methylthiolation of N6-(dimethylallyl)adenosine (i(6)A), leading to the formation of 2-methylthio-N6-(dimethylallyl)adenosine (ms(2)i(6)A) at position 37 in tRNAs that read codons beginning with uridine. The sequence is that of tRNA-2-methylthio-N(6)-dimethylallyladenosine synthase from Neisseria meningitidis serogroup C / serotype 2a (strain ATCC 700532 / DSM 15464 / FAM18).